The chain runs to 346 residues: N-acetyl-gamma-glutamyl-phosphate reductase (346 aa).

The active site involves C150.

This sequence belongs to the NAGSA dehydrogenase family. Type 1 subfamily.

Its subcellular location is the cytoplasm. It catalyses the reaction N-acetyl-L-glutamate 5-semialdehyde + phosphate + NADP(+) = N-acetyl-L-glutamyl 5-phosphate + NADPH + H(+). Its pathway is amino-acid biosynthesis; L-arginine biosynthesis; N(2)-acetyl-L-ornithine from L-glutamate: step 3/4. Catalyzes the NADPH-dependent reduction of N-acetyl-5-glutamyl phosphate to yield N-acetyl-L-glutamate 5-semialdehyde. The sequence is that of N-acetyl-gamma-glutamyl-phosphate reductase from Lachnoclostridium phytofermentans (strain ATCC 700394 / DSM 18823 / ISDg) (Clostridium phytofermentans).